A 553-amino-acid polypeptide reads, in one-letter code: Carboxypeptidase Y homolog A (553 aa).

The N-terminal stretch at Met-1 to Val-17 is a signal peptide. Residues Ser-18–Lys-134 constitute a propeptide that is removed on maturation. Disulfide bonds link Cys-189/Cys-428, Cys-323/Cys-337, Cys-347/Cys-370, Cys-354/Cys-363, and Cys-392/Cys-398. A glycan (N-linked (GlcNAc...) asparagine) is linked at Asn-220. The active site involves Ser-276. Asp-467 is a catalytic residue. An N-linked (GlcNAc...) asparagine glycan is attached at Asn-518. His-529 is an active-site residue.

This sequence belongs to the peptidase S10 family.

Its subcellular location is the vacuole. It catalyses the reaction Release of a C-terminal amino acid with broad specificity.. Its function is as follows. Vacuolar carboxypeptidase involved in degradation of small peptides. Digests preferentially peptides containing an aliphatic or hydrophobic residue in P1' position, as well as methionine, leucine or phenylalanine in P1 position of ester substrate. The protein is Carboxypeptidase Y homolog A (cpyA) of Talaromyces stipitatus (strain ATCC 10500 / CBS 375.48 / QM 6759 / NRRL 1006) (Penicillium stipitatum).